A 120-amino-acid chain; its full sequence is MERHQHLLSEYQQILTLSEQMLMLATVENWNTLVDLEMTYLKAVENTANITISSCTSPVLQELLRQKLRSILENEIEIKRLLQRRLDKLSELVGQSTRQQAVNRTYGQFPDQALLLGETQ.

The required for homodimerization stretch occupies residues 1–50 (MERHQHLLSEYQQILTLSEQMLMLATVENWNTLVDLEMTYLKAVENTANI). Positions 60-98 (LQELLRQKLRSILENEIEIKRLLQRRLDKLSELVGQSTR) are fliD binding.

This sequence belongs to the FliT family. Homodimer. Interacts with FliD and FlhC.

It localises to the cytoplasm. It is found in the cytosol. In terms of biological role, dual-function protein that regulates the transcription of class 2 flagellar operons and that also acts as an export chaperone for the filament-capping protein FliD. As a transcriptional regulator, acts as an anti-FlhDC factor; it directly binds FlhC, thus inhibiting the binding of the FlhC/FlhD complex to class 2 promoters, resulting in decreased expression of class 2 flagellar operons. As a chaperone, effects FliD transition to the membrane by preventing its premature polymerization, and by directing it to the export apparatus. This chain is Flagellar protein FliT, found in Yersinia pestis (strain Pestoides F).